The following is a 131-amino-acid chain: D-ribose pyranase (131 aa).

The Proton donor role is filled by histidine 20. Residues aspartate 28, histidine 98, and 120-122 (YAN) each bind substrate.

Belongs to the RbsD / FucU family. RbsD subfamily. As to quaternary structure, homodecamer.

Its subcellular location is the cytoplasm. It carries out the reaction beta-D-ribopyranose = beta-D-ribofuranose. It functions in the pathway carbohydrate metabolism; D-ribose degradation; D-ribose 5-phosphate from beta-D-ribopyranose: step 1/2. Catalyzes the interconversion of beta-pyran and beta-furan forms of D-ribose. This Bacillus anthracis (strain A0248) protein is D-ribose pyranase.